Reading from the N-terminus, the 292-residue chain is Short chain dehydrogenase/reductase CPUR_05418 (292 aa).

Positions 44 and 156 each coordinate NADP(+). Residues Ser172 and Tyr186 each act as proton donor in the active site. Residues Tyr186, Lys190, Ile221, and Thr223 each contribute to the NADP(+) site. Lys190 acts as the Lowers pKa of active site Tyr in catalysis.

This sequence belongs to the short-chain dehydrogenases/reductases (SDR) family.

It participates in secondary metabolite biosynthesis. In terms of biological role, short chain dehydrogenase/reductase; part of the ergochrome gene cluster responsible for the typical purple-black color of the ergot sclerotia. The ergochrome gene cluster produces several ergot pigments including the yellow ergochrome secalonic acid and its derivatives, as well as the red anthraquinones endocrocin and clavorubin. The pathway begins with the synthesis of atrochrysone thioester by the polyketide synthase (PKS) CPUR_05437. The atrochrysone carboxyl ACP thioesterase CPUR_05436 then breaks the thioester bond and releases the atrochrysone carboxylic acid from CPUR_05437. The atrochrysone carboxylic acid is then converted to atrochrysone which is further transformed into emodin anthrone. The next step is performed by the anthrone oxygenase CPUR_05434 that catalyzes the oxidation of emodinanthrone to emodin. Emodin is further modified to yield monodictyphenone via several steps involving CPUR_05427, CPUR_05428, CPUR_05429 and CPUR_05430. The short chain dehydrogenase/reductase CPUR_05418 then catalyzes the C-5 ketoreduction to give the xanthone skeleton of the monomeric units. Ergochromes formation requires further dimerization steps of different xanthone units, probably catalyzed by the cytochrome P450 monooxygenase CPUR_05419. CPUR_05425, CPUR_05426 and CPUR_05431 are unique to Claviceps, thus it is likely that they are involved in further modification of xanthone units or in their dimerization. The yellow ergochromes and the red anthraquinone pigments endocrocin and clavorubin are products from the same PKS derived precursors and the latter are likely shunt products in the pathway of xanthone biosynthesis. It is proposed that atrochrysone carboxylic acid released from the PKS CPUR_05437 can also be converted to endocrocin anthrone which is further oxidized into endocrocin by CPUR_05435. Endocrocin could be then modified to clavorubin, possibly by CPUR_05423 and CPUR_05431. Clavorubin is the principal anthraquinone metabolite produced by the cluster with a much higher yield compared to endocrocin. The chain is Short chain dehydrogenase/reductase CPUR_05418 from Claviceps purpurea (strain 20.1) (Ergot fungus).